The following is a 235-amino-acid chain: RNA polymerase sigma factor SigI7 (235 aa).

A Polymerase core binding motif is present at residues 49-62; sequence DELSIALMAFVETI. A DNA-binding region (H-T-H motif) is located at residues 191–210; sequence VAEIEQSLKIPRKTIERARK.

It belongs to the sigma-70 factor family. SigI subfamily. As to quaternary structure, interacts with RsgI7.

The protein localises to the cytoplasm. Negatively regulated by the anti-sigma-I factor RsgI7. Functionally, sigma factors are initiation factors that promote the attachment of RNA polymerase to specific initiation sites and are then released. The chain is RNA polymerase sigma factor SigI7 from Acetivibrio thermocellus (strain ATCC 27405 / DSM 1237 / JCM 9322 / NBRC 103400 / NCIMB 10682 / NRRL B-4536 / VPI 7372) (Clostridium thermocellum).